Consider the following 1052-residue polypeptide: Membrane-bound transcription factor site-1 protease (1052 aa).

A signal peptide spans 1 to 17 (MKLINIWLLLLVVLLCG). A propeptide spanning residues 18 to 186 (KKHLGDRLGK…TGRHSSRRLL (169 aa)) is cleaved from the precursor. Asparagine 148 carries N-linked (GlcNAc...) asparagine glycosylation. A Phosphoserine modification is found at serine 168. The Lumenal portion of the chain corresponds to 187-999 (RAIPRQVAQT…MPGRYNQEVG (813 aa)). Positions 190 to 472 (PRQVAQTLQA…HGKLDLLRAY (283 aa)) constitute a Peptidase S8 domain. The Charge relay system role is filled by aspartate 218. Asparagine 236 carries an N-linked (GlcNAc...) asparagine glycan. Catalysis depends on histidine 249, which acts as the Charge relay system. N-linked (GlcNAc...) asparagine glycosylation is present at asparagine 305. Residue serine 414 is the Charge relay system of the active site. Asparagine 515 and asparagine 728 each carry an N-linked (GlcNAc...) asparagine glycan. The segment covering 877 to 887 (PSLSHSGNRQR) has biased composition (polar residues). Positions 877–900 (PSLSHSGNRQRPPSGAGLAPPERM) are disordered. Asparagine 939 is a glycosylation site (N-linked (GlcNAc...) asparagine). Residues 1000–1022 (QTIPVFAFLGAMVALAFFVVQIS) form a helical membrane-spanning segment. Residues 1023–1052 (KAKSRPKRRRPRAKRPQLTQQTHPPRTPSV) lie on the Cytoplasmic side of the membrane. The segment covering 1025 to 1037 (KSRPKRRRPRAKR) has biased composition (basic residues). The segment at 1025–1052 (KSRPKRRRPRAKRPQLTQQTHPPRTPSV) is disordered.

Belongs to the peptidase S8 family. Requires Ca(2+) as cofactor. The 148 kDa zymogen is processed progressively into two membrane-bound 120 and 106 kDa forms in the endoplasmic reticulum, and late into a secreted 98 kDa form. The propeptide is autocatalytically removed through an intramolecular cleavage after Leu-186. Further cleavage generates 14, 10, and 8 kDa intermediates.

The protein localises to the endoplasmic reticulum membrane. It is found in the golgi apparatus membrane. The catalysed reaction is Processes precursors containing basic and hydrophobic/aliphatic residues at P4 and P2, respectively, with a relatively relaxed acceptance of amino acids at P1 and P3.. With respect to regulation, inhibited by divalent copper and zinc ions, but not by nickel or cobalt. Inhibited by its prosegment, but not smaller fragments. Inhibited by 4-(2-aminoethyl)benzenesulfonyl fluoride (AEBSF), a serine protease inhibitor. Its function is as follows. Serine protease that cleaves after hydrophobic or small residues, provided that Arg or Lys is in position P4: known substrates include SREBF1/SREBP1, SREBF2/SREBP2, BDNF, GNPTAB, ATF6, ATF6B and FAM20C. Cleaves substrates after Arg-Ser-Val-Leu (SREBP2), Arg-His-Leu-Leu (ATF6), Arg-Gly-Leu-Thr (BDNF) and its own propeptide after Arg-Arg-Leu-Leu. Catalyzes the first step in the proteolytic activation of the sterol regulatory element-binding proteins (SREBPs) SREBF1/SREBP1 and SREBF2/SREBP2. Also mediates the first step in the proteolytic activation of the cyclic AMP-dependent transcription factor ATF-6 (ATF6 and ATF6B). Mediates the protein cleavage of GNPTAB into subunit alpha and beta, thereby participating in biogenesis of lysosomes. Cleaves the propeptide from FAM20C which is required for FAM20C secretion from the Golgi apparatus membrane and for enhancement of FAM20C kinase activity, promoting osteoblast differentiation and biomineralization. Involved in the regulation of M6P-dependent Golgi-to-lysosome trafficking of lysosomal enzymes. It is required for the activation of CREB3L2/BBF2H7, a transcriptional activator of MIA3/TANGO and other genes controlling mega vesicle formation. Therefore, it plays a key role in the regulation of mega vesicle-mediated collagen trafficking. In astrocytes and osteoblasts, upon DNA damage and ER stress, mediates the first step of the regulated intramembrane proteolytic activation of the transcription factor CREB3L1, leading to the inhibition of cell-cycle progression. This is Membrane-bound transcription factor site-1 protease from Cricetulus griseus (Chinese hamster).